Consider the following 543-residue polypeptide: Zinc finger CCCH-type with G patch domain-containing protein (543 aa).

Disordered stretches follow at residues 55-79 (AATSDDDDAPDTAGRAPPATADNPI) and 95-132 (TEDSAAGEQAGEQTATEPERQPNDDDADNDDDADDKLD). Low complexity predominate over residues 65–76 (DTAGRAPPATAD). The segment covering 118 to 131 (DDDADNDDDADDKL) has biased composition (acidic residues). The C3H1-type zinc finger occupies 186–209 (PCAYFLEGECRFTDEKCRYSHGEV). Residues 272–304 (PFEDLLPLDEDEDGQEAAEDSESDTDGADEEEA) are disordered. A compositionally biased stretch (acidic residues) spans 277-304 (LPLDEDEDGQEAAEDSESDTDGADEEEA). The region spanning 335–381 (TRGIGSKIMQKMGYIVGTGLGREGEGIVVPVSAQVLPQGRSLDYCME) is the G-patch domain. The segment at 438 to 460 (GAAGGESSRPNRNRPGALSRQEL) is disordered.

It is found in the nucleus. Transcription repressor. The sequence is that of Zinc finger CCCH-type with G patch domain-containing protein from Anopheles gambiae (African malaria mosquito).